The sequence spans 204 residues: Urease accessory protein UreG (204 aa).

Gly-12–Thr-19 lines the GTP pocket.

The protein belongs to the SIMIBI class G3E GTPase family. UreG subfamily. As to quaternary structure, homodimer. UreD, UreF and UreG form a complex that acts as a GTP-hydrolysis-dependent molecular chaperone, activating the urease apoprotein by helping to assemble the nickel containing metallocenter of UreC. The UreE protein probably delivers the nickel.

It localises to the cytoplasm. Functionally, facilitates the functional incorporation of the urease nickel metallocenter. This process requires GTP hydrolysis, probably effectuated by UreG. The sequence is that of Urease accessory protein UreG from Pseudomonas fluorescens (strain Pf0-1).